A 347-amino-acid polypeptide reads, in one-letter code: Secretory carrier-associated membrane protein 3 (347 aa).

Residues 1-88 (MAQSRDGGNP…EPKNYGSYST (88 aa)) form a disordered region. At 1 to 170 (MAQSRDGGNP…QKTVSTMYYL (170 aa)) the chain is on the cytoplasmic side. S32 bears the Phosphoserine mark. A Phosphothreonine modification is found at T37. Phosphotyrosine occurs at positions 41 and 53. The span at 49–66 (PPPAYEPPAPAPLPPPSA) shows a compositional bias: pro residues. A phosphoserine mark is found at S72 and S76. At Y83 the chain carries Phosphotyrosine. The residue at position 85 (S85) is a Phosphoserine. A run of 4 helical transmembrane segments spans residues 171–191 (WMCS…SFCV), 197–217 (AGFG…FVCW), 247–267 (FVLQ…SALV), and 277–297 (VLML…IVML). Residues 298-347 (KRIHSLYRRTGASFQKAQQEFAAGVFSNPAVRTAAANAAAGAAENAFRAP) lie on the Cytoplasmic side of the membrane. K313 is covalently cross-linked (Glycyl lysine isopeptide (Lys-Gly) (interchain with G-Cter in SUMO1)).

It belongs to the SCAMP family. Interacts with NEDD4, NEDD4L and TSG101. Interacts with RNF126. Post-translationally, monoubiquitinated. In terms of tissue distribution, widely expressed, with highest expression in heart and skeletal muscle.

The protein resides in the membrane. Functionally, functions in post-Golgi recycling pathways. Acts as a recycling carrier to the cell surface. The protein is Secretory carrier-associated membrane protein 3 (SCAMP3) of Homo sapiens (Human).